We begin with the raw amino-acid sequence, 1404 residues long: G8 domain-containing protein DDB_G0286897 (1404 aa).

Positions 1-20 (MNYFKYFIFVVFLFFTIVKC) are cleaved as a signal peptide. The next 2 membrane-spanning stretches (helical) occupy residues 97–117 (LVGFNWISMLIASLLSIGLFA) and 128–148 (IIILIIGFICLSLMINGIQSI). Asn352, Asn365, Asn413, Asn481, Asn639, Asn838, Asn979, Asn1003, Asn1017, Asn1253, and Asn1334 each carry an N-linked (GlcNAc...) asparagine glycan. Residues 553–679 (STWASGFVPL…YHNTWTKLST (127 aa)) enclose the G8 domain.

This sequence belongs to the comF family.

The protein localises to the membrane. The protein is G8 domain-containing protein DDB_G0286897 of Dictyostelium discoideum (Social amoeba).